Consider the following 127-residue polypeptide: Holo-[acyl-carrier-protein] synthase (127 aa).

Asp-9 and Glu-58 together coordinate Mg(2+).

It belongs to the P-Pant transferase superfamily. AcpS family. Mg(2+) serves as cofactor.

It is found in the cytoplasm. The enzyme catalyses apo-[ACP] + CoA = holo-[ACP] + adenosine 3',5'-bisphosphate + H(+). In terms of biological role, transfers the 4'-phosphopantetheine moiety from coenzyme A to a Ser of acyl-carrier-protein. The protein is Holo-[acyl-carrier-protein] synthase of Shewanella sp. (strain ANA-3).